The chain runs to 608 residues: Sensor protein kinase WalK (608 aa).

Transmembrane regions (helical) follow at residues 14 to 34 and 182 to 202; these read LVIV…LYFT and IFII…FFIA. The 53-residue stretch at 203-255 folds into the HAMP domain; the sequence is RTITRPITDMRNQTVEMSKGNYTQRVKIYGNDEIGELALAFNNLSKRVQEAQA. One can recognise a PAS domain in the interval 260–330; sequence EKRRLDSVIT…EIQENNDSFL (71 aa). Positions 324–377 constitute a PAC domain; that stretch reads ENNDSFLLDINEDEGIIARVNFSTIVQETGFVTGYIAVLHDVTEQQQVERERRE. Positions 381–599 constitute a Histidine kinase domain; sequence NVSHELRTPL…SIFITLPCEV (219 aa). Residue His-384 is modified to Phosphohistidine; by autocatalysis.

Autophosphorylated.

The protein resides in the cell membrane. It carries out the reaction ATP + protein L-histidine = ADP + protein N-phospho-L-histidine.. Member of the two-component regulatory system WalK/WalR. WalK functions as a sensor protein kinase which is autophosphorylated at a histidine residue and transfers its phosphate group to WalR. The protein is Sensor protein kinase WalK (walK) of Staphylococcus haemolyticus (strain JCSC1435).